A 120-amino-acid polypeptide reads, in one-letter code: uncharacterized protein (120 aa).

A coiled-coil region spans residues 45-78; the sequence is QLISESLKIAQKDLMEVRKELRKRKIAIRETERD.

This is an uncharacterized protein from Bacillus subtilis (strain 168).